A 186-amino-acid chain; its full sequence is uncharacterized protein (186 aa).

3 helical membrane-spanning segments follow: residues Gly43–Pro63, Leu69–Val89, and Trp143–Val163.

It localises to the endoplasmic reticulum membrane. This is an uncharacterized protein from Schizosaccharomyces pombe (strain 972 / ATCC 24843) (Fission yeast).